A 451-amino-acid chain; its full sequence is Phosphoglucosamine mutase (451 aa).

Serine 102 (phosphoserine intermediate) is an active-site residue. Mg(2+) is bound by residues serine 102, aspartate 242, aspartate 244, and aspartate 246. A Phosphoserine modification is found at serine 102.

Belongs to the phosphohexose mutase family. The cofactor is Mg(2+). Post-translationally, activated by phosphorylation.

The catalysed reaction is alpha-D-glucosamine 1-phosphate = D-glucosamine 6-phosphate. In terms of biological role, catalyzes the conversion of glucosamine-6-phosphate to glucosamine-1-phosphate. The chain is Phosphoglucosamine mutase from Staphylococcus saprophyticus subsp. saprophyticus (strain ATCC 15305 / DSM 20229 / NCIMB 8711 / NCTC 7292 / S-41).